Reading from the N-terminus, the 291-residue chain is Bifunctional protein FolD (291 aa).

Residues glycine 168–glycine 170, threonine 195, and valine 236 contribute to the NADP(+) site.

It belongs to the tetrahydrofolate dehydrogenase/cyclohydrolase family. Homodimer.

The enzyme catalyses (6R)-5,10-methylene-5,6,7,8-tetrahydrofolate + NADP(+) = (6R)-5,10-methenyltetrahydrofolate + NADPH. It carries out the reaction (6R)-5,10-methenyltetrahydrofolate + H2O = (6R)-10-formyltetrahydrofolate + H(+). The protein operates within one-carbon metabolism; tetrahydrofolate interconversion. Its function is as follows. Catalyzes the oxidation of 5,10-methylenetetrahydrofolate to 5,10-methenyltetrahydrofolate and then the hydrolysis of 5,10-methenyltetrahydrofolate to 10-formyltetrahydrofolate. This Bifidobacterium adolescentis (strain ATCC 15703 / DSM 20083 / NCTC 11814 / E194a) protein is Bifunctional protein FolD.